A 494-amino-acid polypeptide reads, in one-letter code: Glutamate--tRNA ligase (494 aa).

Residues Pro10–Thr20 carry the 'HIGH' region motif. Cys107, Cys109, Cys134, and His136 together coordinate Zn(2+). The 'KMSKS' region motif lies at Lys251 to Arg255. Residue Lys254 coordinates ATP.

The protein belongs to the class-I aminoacyl-tRNA synthetase family. Glutamate--tRNA ligase type 1 subfamily. As to quaternary structure, monomer. Zn(2+) is required as a cofactor.

The protein localises to the cytoplasm. The enzyme catalyses tRNA(Glu) + L-glutamate + ATP = L-glutamyl-tRNA(Glu) + AMP + diphosphate. Catalyzes the attachment of glutamate to tRNA(Glu) in a two-step reaction: glutamate is first activated by ATP to form Glu-AMP and then transferred to the acceptor end of tRNA(Glu). The sequence is that of Glutamate--tRNA ligase from Pseudomonas aeruginosa (strain ATCC 15692 / DSM 22644 / CIP 104116 / JCM 14847 / LMG 12228 / 1C / PRS 101 / PAO1).